A 344-amino-acid chain; its full sequence is AP2/ERF and B3 domain-containing transcription factor RAV1 (344 aa).

The span at 1 to 15 shows a compositional bias: low complexity; sequence MESSSVDESTTSTGS. The interval 1 to 22 is disordered; the sequence is MESSSVDESTTSTGSICETPAI. Positions 61–116 form a DNA-binding region, AP2/ERF; that stretch reads KYKGVVPQPNGRWGAQIYEKHQRVWLGTFNEEDEAARAYDVAVHRFRRRDAVTNFK. A disordered region spans residues 148–169; sequence ELEQSKRRRNGNGNMTRTLLTS. Residues 188–292 constitute a DNA-binding region (TF-B3); it reads FEKAVTPSDV…QLYIGWKSRS (105 aa).

This sequence belongs to the AP2/ERF transcription factor family. RAV subfamily. As to quaternary structure, monomer. In terms of tissue distribution, expressed in all tissues examined: Roots, rosette leaves, cauline leaves, inflorescence stems, flowers and siliques. Highest expression in roots and rosette leaves. Very low expression in flowers.

It is found in the nucleus. Binds specifically to bipartite recognition sequences composed of two unrelated motifs, 5'-CAACA-3' and 5'-CACCTG-3'. May function as negative regulator of plant growth and development. The protein is AP2/ERF and B3 domain-containing transcription factor RAV1 (RAV1) of Arabidopsis thaliana (Mouse-ear cress).